The sequence spans 138 residues: uncharacterized protein (138 aa).

A disordered region spans residues 1–73; it reads MCSAGQLLGG…NHTGEPVGDD (73 aa). A compositionally biased stretch (gly residues) spans 7 to 18; sequence LLGGGGGGGGSG. Residues 19–29 are compositionally biased toward basic and acidic residues; it reads GERDEDRDALA. A compositionally biased stretch (low complexity) spans 30–43; sequence ERAAAGTEQESGAS. A helical transmembrane segment spans residues 106–126; sequence VIVIFFWVMLWFLGLPAFGLV.

It belongs to the FAM241 family.

It localises to the membrane. This is an uncharacterized protein from Bos taurus (Bovine).